Reading from the N-terminus, the 2705-residue chain is Teneurin-1 (2705 aa).

Disordered stretches follow at residues 1–73 (MEQM…STQD) and 135–222 (CLSS…TQDS). A Teneurin N-terminal domain is found at 1–299 (MEQMDCKPYQ…KPYRCCNWKC (299 aa)). Over 1–305 (MEQMDCKPYQ…NWKCTALSAT (305 aa)) the chain is Cytoplasmic. Over residues 32-46 (DGRKQRQSYDSRETL) the composition is skewed to basic and acidic residues. The Nuclear localization signal (NLS) signature appears at 62-65 (RKRK). Residues 135-147 (CLSSRANSALSLT) show a composition bias toward polar residues. Residues 148-157 (DTDHERKSDG) are compositionally biased toward basic and acidic residues. The span at 173-182 (PLPPPPPPPH) shows a compositional bias: pro residues. Residues 271–278 (PPPRPLPR) carry the Required for interaction with SORBS1 (Ten-1 ICD form) motif. The chain crosses the membrane as a helical span at residues 306 to 326 (AITVTLALLLAYVIAVHLFGL). At 327-2705 (TWQLQPVEGQ…FMRQSEIGRR (2379 aa)) the chain is on the extracellular side. Asn414 carries an N-linked (GlcNAc...) asparagine glycan. EGF-like domains are found at residues 509–540 (VLDD…PDCA), 541–572 (KDSC…ECDV), 573–605 (PEEQ…EICE), 606–638 (EEDC…NCET), 639–672 (SLPI…SDCS), 673–702 (TELC…GPTC), 703–734 (EERT…DHCT), and 735–769 (IDGC…SGCN). 22 cysteine pairs are disulfide-bonded: Cys513-Cys523, Cys517-Cys528, Cys530-Cys539, Cys548-Cys559, Cys561-Cys570, Cys577-Cys588, Cys582-Cys593, Cys595-Cys604, Cys609-Cys620, Cys614-Cys625, Cys627-Cys636, Cys647-Cys660, Cys662-Cys671, Cys676-Cys686, Cys680-Cys691, Cys693-Cys702, Cys707-Cys717, Cys711-Cys722, Cys724-Cys733, Cys738-Cys748, Cys742-Cys757, and Cys759-Cys768. Asn878 and Asn1057 each carry an N-linked (GlcNAc...) asparagine glycan. NHL repeat units lie at residues 1167 to 1192 (LFAP…VRRI), 1202 to 1246 (LELR…AKSL), 1272 to 1316 (SHCG…NGMI), 1331 to 1382 (LSCD…IAGR), and 1461 to 1504 (CFSG…VSRN). One copy of the YD 1 repeat lies at 1514–1533 (YEIASPADQELYQFTINGTH). Residues Asn1530 and Asn1547 are each glycosylated (N-linked (GlcNAc...) asparagine). YD repeat units follow at residues 1550–1570 (YSGE…VHIR), 1588–1612 (YWLT…ALMT), 1613–1634 (YPGN…TVYE), and 1635–1655 (YDSD…SSFH). N-linked (GlcNAc...) asparagine glycosylation is found at Asn1643, Asn1679, Asn1737, Asn1761, and Asn1822. 11 YD repeats span residues 1825–1844 (YSHS…EKME), 1845–1865 (YDPS…WSYT), 1866–1884 (YLEK…YIFE), 1885–1905 (YDQS…HALQ), 1913–1929 (YRNI…FIQD), 1930–1949 (VTRD…RRVL), 1950–1969 (YKYS…TQVT), 1972–1992 (YEES…FICT), 1995–2015 (YRQT…EGLV), 2065–2085 (YDLN…FSAN), and 2093–2113 (YEIL…MGRM). N-linked (GlcNAc...) asparagine glycosylation is present at Asn2125. YD repeat units follow at residues 2133-2153 (YDRD…WRYS), 2154-2174 (YDLN…LTPL), 2176-2196 (YDLR…DEDG), 2208-2228 (YNSN…TVQY), and 2230-2250 (YDGL…LQFF). An N-linked (GlcNAc...) asparagine glycan is attached at Asn2265. YD repeat units follow at residues 2276-2293 (YDLQ…GEEY) and 2294-2317 (YVAC…IKEI). N-linked (GlcNAc...) asparagine glycosylation occurs at Asn2582.

This sequence belongs to the tenascin family. Teneurin subfamily. In terms of assembly, homodimer; disulfide-linked. Heterodimer with other teneurins. Ten-1 ICD interacts with SORBS1 (via third SH3 domain). Interacts with MBD1 isoform 2. Derives from the plasma membrane form by proteolytic processing. Further proteolytic cleavage may be generated. Post-translationally, derives from the plasma membrane form by proteolytic cleavage and translocates to the nucleus. In terms of tissue distribution, expressed in the neurons of the developing visual system and in fetal brain.

It is found in the cell membrane. The protein localises to the nucleus. It localises to the nucleus speckle. Its subcellular location is the nucleus matrix. The protein resides in the cytoplasm. It is found in the cytoskeleton. Functionally, involved in neural development, regulating the establishment of proper connectivity within the nervous system. May function as a cellular signal transducer. Plays a role in the regulation of neuroplasticity in the limbic system. Mediates a rapid reorganization of actin- and tubulin-based cytoskeleton elements with an increase in dendritic arborization and spine density formation of neurons in the hippocampus and amygdala. Induces BDNF transcription inhibition in neurons. Activates the mitogen-activated protein (MAP) kinase 2 (MEK2) and extracellular signal-regulated kinase (ERK) cascade. Its function is as follows. Induces gene transcription activation. This chain is Teneurin-1 (TENM1), found in Gallus gallus (Chicken).